A 437-amino-acid polypeptide reads, in one-letter code: MTEKIYDAIVVGAGFSGLVAARELSAQGRSVLIIEARHRLGGRTHVVNFLGRPVEIGGAGVHWCQPHVFAEMQRYGFGFKEAPLADLDKAYMVFADGQKIDVPPATFDEEYTTAFEKFCSRSRELFPRPYSPLDNHEVSNLDGVSARDHLESLGLNELQLASMNAELTLYGGAPTTELSYPSFVKFHALASWDTITFTDSEKRYHVQGGTNALCQAIFDDCRADSEFGVPVEAVAQTDNGVTVTLADKRVFRALTCVLTLPTKVYADVRFEPPLPPEKRAFIEHAEMADGAELYVHVRQNLGNTFTFCDDPNPFNAVQTYAYDDELGTILKITIGRQSLINLENFDAIAAEIRKIHGDVEVLEALPYNWAMDEYARTSYPAMRKGWFSRYKDMAKPENRLFFAGSATADGWHEYIDGAIESGIRVGREIRHFMKATA.

Residues Ser-16, 35-37 (EAR), Arg-43, 57-60 (GGAG), Val-231, Ser-405, and 413-415 (EYI) each bind FAD.

Belongs to the flavin monoamine oxidase family. As to quaternary structure, homodimer. FAD is required as a cofactor.

It carries out the reaction (S)-6-hydroxynicotine + O2 + H2O = 6-hydroxypseudooxynicotine + H2O2. The catalysed reaction is (S)-6-hydroxynicotine + O2 = 6-hydroxy-N-methylmyosmine + H2O2. Its pathway is alkaloid degradation; nicotine degradation; 6-hydroxypseudooxynicotine from nicotine (S-isomer route): step 2/2. Partially inhibited by Co(2+) or Zn(2+) and significantly inhibited by Ag(+), Cu(2+) and Hg(2+). Involved in the degradation of L-nicotine. Catalyzes the oxidation of (S)-6-hydroxynicotine (6-hydroxy-L-nicotine) to 6-hydroxypseudooxynicotine. Oxidation of the pyrrolidine ring of (S)-6-hydroxynicotine leads to the formation of the optically inactive 6-hydroxy-N-methylmyosmine, which hydrolyzes spontaneously to 6-hydroxypseudooxynicotine. Acts with absolute stereospecificity on the L-form of 6-hydroxynicotine. Also involved in the degradation of nornicotine, and catalyzes the oxidation of 6-hydroxynornicotine to 6-hydroxymyosmine, which hydrolyzes to 6-hydroxypseudooxynornicotine. In vitro, converts (S)-nicotine into N-methylmyosmine, which spontaneously hydrolyzes spontaneously into pseudooxynicotine, but catalytic efficiency is about 1900-fold higher with (S)-6-hydroxynicotine. The chain is (S)-6-hydroxynicotine oxidase from Shinella sp. (strain HZN7).